We begin with the raw amino-acid sequence, 553 residues long: Terpene synthase 16 (553 aa).

The Mg(2+) site is built by aspartate 303, aspartate 307, and glutamate 457. Positions 303–307 match the DDXXD motif motif; that stretch reads DDTYD.

The protein belongs to the terpene synthase family. Tpsa subfamily. Mg(2+) serves as cofactor. Requires Mn(2+) as cofactor. Expressed in leaves, trichomes and flowers.

Its pathway is secondary metabolite biosynthesis; terpenoid biosynthesis. In terms of biological role, sesquiterpene synthase involved in the biosynthesis of volatile compounds. No activity detected with geranyl diphosphate (GPP) and farnesyl diphosphate (FPP) as substrates. This Solanum lycopersicum (Tomato) protein is Terpene synthase 16.